The primary structure comprises 45 residues: Osteocalcin (45 aa).

The Gla domain occupies 1-41 (AAGELTLTQLESLREVCEANLACEDMMDAQGIIAAYTAYYG). Residues Glu11, Glu15, Glu18, and Glu24 each contribute to the Ca(2+) site. 4-carboxyglutamate is present on residues Glu11, Glu15, and Glu18. A disulfide bridge connects residues Cys17 and Cys23.

It belongs to the osteocalcin/matrix Gla protein family. Post-translationally, gamma-carboxyglutamate residues are formed by vitamin K dependent carboxylation by GGCX. These residues are essential for the binding of calcium. In terms of tissue distribution, also found in smaller quantities in dentin.

It localises to the secreted. In terms of biological role, the carboxylated form is one of the main organic components of the bone matrix, which constitutes 1-2% of the total bone protein. The carboxylated form binds strongly to apatite and calcium. This is Osteocalcin (bglap) from Lepomis macrochirus (Bluegill).